We begin with the raw amino-acid sequence, 302 residues long: Calpain-1 catalytic subunit (302 aa).

A domain III region spans residues R1–D114. The interval Q115–E130 is linker. The tract at residues I131–F301 is domain IV. 3 consecutive EF-hand domains span residues F173–R206, N203–K238, and V268–A302. Ca(2+)-binding residues include D186, D188, N190, K192, E197, D216, D218, S220, S222, and E227.

Belongs to the peptidase C2 family. Forms a heterodimer with a small (regulatory) subunit CAPNS1. Ca(2+) is required as a cofactor. The N-terminus is blocked. Post-translationally, undergoes calcium-induced successive autoproteolytic cleavages that generate a membrane-bound 78 kDa active form and an intracellular 75 kDa active form. Calpastatin reduces with high efficiency the transition from 78 kDa to 75 kDa calpain forms. In terms of tissue distribution, ubiquitous.

It is found in the cytoplasm. The protein resides in the cell membrane. The enzyme catalyses Broad endopeptidase specificity.. Activated by micromolar concentrations of calcium and inhibited by calpastatin. Functionally, calcium-regulated non-lysosomal thiol-protease which catalyzes limited proteolysis of substrates involved in cytoskeletal remodeling and signal transduction. Proteolytically cleaves CTBP1. Cleaves and activates caspase-7 (CASP7). The polypeptide is Calpain-1 catalytic subunit (Oryctolagus cuniculus (Rabbit)).